The sequence spans 163 residues: Glutathione peroxidase-like peroxiredoxin HYR1 (163 aa).

The Cysteine sulfenic acid (-SOH) intermediate role is filled by cysteine 36. Cysteine 36 and cysteine 82 are joined by a disulfide.

This sequence belongs to the glutathione peroxidase family. Interacts with YAP1 and probably YBP1.

The protein localises to the cytoplasm. It is found in the mitochondrion intermembrane space. It localises to the peroxisome matrix. The enzyme catalyses a hydroperoxide + [thioredoxin]-dithiol = an alcohol + [thioredoxin]-disulfide + H2O. Involved in oxidative stress response and redox homeostasis. Functions as a sensor and transducer of hydroperoxide stress. In response to hydroperoxide stress it oxidizes (activates) the transcription activator YAP1, which is involved in transcription activation of genes of the oxidative stress response pathway. May also play a direct role in hydroperoxide scavenging, being the most active of three closely related S.cerevisiae peroxiredoxins (GPX1, GPX2, and HYR1/GPX3) with respect to peroxide and lipid hydroperoxide reduction. The three enzymes are not required for the glutaredoxin-mediated antioxidant function. In the presence of peroxides, HYR1/GPX3 is directly oxidized at Cys-36 to form a cysteine sulfenic acid (-SOH). Cys-36-SOH then forms either an intramolecular disulfide bond (Cys-36 with Cys-82) or a transient, intermolecular disulfide bond with 'Cys-598' of YAP1, which is further resolved into a YAP1 intramolecular disulfide bond ('Cys-303' with 'Cys-598'), which causes its nuclear accumulation and activation, and a reduced Cys-36 in HYR1/GPX3. The chain is Glutathione peroxidase-like peroxiredoxin HYR1 from Saccharomyces cerevisiae (strain ATCC 204508 / S288c) (Baker's yeast).